The chain runs to 701 residues: Elongation factor G 2 (701 aa).

The tr-type G domain occupies 8 to 290; the sequence is ERYRNIGISA…AVIDYLPSPA (283 aa). GTP contacts are provided by residues 17–24, 88–92, and 142–145; these read AHIDAGKT, DTPGH, and NKMD.

Belongs to the TRAFAC class translation factor GTPase superfamily. Classic translation factor GTPase family. EF-G/EF-2 subfamily.

The protein resides in the cytoplasm. In terms of biological role, catalyzes the GTP-dependent ribosomal translocation step during translation elongation. During this step, the ribosome changes from the pre-translocational (PRE) to the post-translocational (POST) state as the newly formed A-site-bound peptidyl-tRNA and P-site-bound deacylated tRNA move to the P and E sites, respectively. Catalyzes the coordinated movement of the two tRNA molecules, the mRNA and conformational changes in the ribosome. This is Elongation factor G 2 from Cupriavidus pinatubonensis (strain JMP 134 / LMG 1197) (Cupriavidus necator (strain JMP 134)).